Here is a 398-residue protein sequence, read N- to C-terminus: ATP-dependent RNA helicase eIF4A (398 aa).

The short motif at 25–53 is the Q motif element; the sequence is DSFDTMNLKPELLRGVYAYGFERPSAIQQ. The Helicase ATP-binding domain occupies 56–226; it reads IMPVIKGHDV…TKFMRDPVRI (171 aa). Position 69-76 (69-76) interacts with ATP; the sequence is AQSGTGKT. A DEAD box motif is present at residues 174 to 177; sequence DEAD. The Helicase C-terminal domain occupies 237-398; the sequence is GIKQFYIAVE…EMPMNVADLI (162 aa).

This sequence belongs to the DEAD box helicase family. eIF4A subfamily. Component of the eIF4F complex, which composition varies with external and internal environmental conditions. It is composed of at least eIF4A, eIF4E and eIF4G.

The protein resides in the cytoplasm. It catalyses the reaction ATP + H2O = ADP + phosphate + H(+). In terms of biological role, ATP-dependent RNA helicase which is a subunit of the eIF4F complex involved in cap recognition and is required for mRNA binding to ribosome. In the current model of translation initiation, eIF4A unwinds RNA secondary structures in the 5'-UTR of mRNAs which is necessary to allow efficient binding of the small ribosomal subunit, and subsequent scanning for the initiator codon. The polypeptide is ATP-dependent RNA helicase eIF4A (tif1) (Sclerotinia sclerotiorum (strain ATCC 18683 / 1980 / Ss-1) (White mold)).